Reading from the N-terminus, the 118-residue chain is MRVKGPSSRRKKKKILKLAKGYRGQRSRSYRRAKEAVMRALYYQYRDRKLRKREFRRLWIARINAAVRAYGLNYSTFINGLKKAGIELDRKILADMAVRDPQAFEQVVNKVKEALQVQ.

The protein belongs to the bacterial ribosomal protein bL20 family.

Functionally, binds directly to 23S ribosomal RNA and is necessary for the in vitro assembly process of the 50S ribosomal subunit. It is not involved in the protein synthesizing functions of that subunit. The sequence is that of Large ribosomal subunit protein bL20 (rplT) from Aquifex aeolicus (strain VF5).